Reading from the N-terminus, the 189-residue chain is Translation machinery-associated protein 22 (189 aa).

In terms of domain architecture, SUI1 spans 94 to 165 (VTIKRIERNK…EAKDYIEKLL (72 aa)).

Belongs to the DENR family. As to quaternary structure, interacts with the 40S ribosomal subunit.

The protein resides in the cytoplasm. This is Translation machinery-associated protein 22 (TMA22) from Debaryomyces hansenii (strain ATCC 36239 / CBS 767 / BCRC 21394 / JCM 1990 / NBRC 0083 / IGC 2968) (Yeast).